Consider the following 420-residue polypeptide: Histidine--tRNA ligase (420 aa).

This sequence belongs to the class-II aminoacyl-tRNA synthetase family. In terms of assembly, homodimer.

The protein resides in the cytoplasm. The enzyme catalyses tRNA(His) + L-histidine + ATP = L-histidyl-tRNA(His) + AMP + diphosphate + H(+). The sequence is that of Histidine--tRNA ligase from Thermotoga petrophila (strain ATCC BAA-488 / DSM 13995 / JCM 10881 / RKU-1).